Reading from the N-terminus, the 361-residue chain is Probable lipid desaturase ADS3.2, chloroplastic (361 aa).

Residues 1–57 (MMSLSTTLKPLSHFSPFVKRHNPKTNNTLFTLDTHNFTNSFWSKRGGSVSHRKHTVV) constitute a chloroplast transit peptide. Helical transmembrane passes span 99 to 118 (LVIFVGTHLLSLLAPFYFSW) and 122 to 139 (WVFPWLVFINGICITLSY). Positions 140–145 (HRNLSH) match the Histidine box-1 motif. Residues 177 to 181 (HRYHH) carry the Histidine box-2 motif. A helical transmembrane segment spans residues 246-266 (FLFYFCGGMPLLVWGIGITIA). Positions 309–313 (HNNHH) match the Histidine box-3 motif.

Belongs to the fatty acid desaturase type 1 family. Fe(2+) is required as a cofactor.

Its subcellular location is the plastid. The protein resides in the chloroplast membrane. It participates in lipid metabolism; polyunsaturated fatty acid biosynthesis. The chain is Probable lipid desaturase ADS3.2, chloroplastic from Arabidopsis thaliana (Mouse-ear cress).